We begin with the raw amino-acid sequence, 230 residues long: Ribonuclease 3 (230 aa).

Residues 6 to 135 enclose the RNase III domain; the sequence is VSELRARYGI…FNGALFLDQG (130 aa). Glu-48 contacts Mg(2+). The active site involves Asp-52. Asp-121 and Glu-124 together coordinate Mg(2+). Residue Glu-124 is part of the active site. One can recognise a DRBM domain in the interval 161–230; it reads DYKTNLQEFL…AKKALEQLKA (70 aa).

Belongs to the ribonuclease III family. Homodimer. It depends on Mg(2+) as a cofactor.

It is found in the cytoplasm. It catalyses the reaction Endonucleolytic cleavage to 5'-phosphomonoester.. Functionally, digests double-stranded RNA. Involved in the processing of primary rRNA transcript to yield the immediate precursors to the large and small rRNAs (23S and 16S). Processes some mRNAs, and tRNAs when they are encoded in the rRNA operon. Processes pre-crRNA and tracrRNA of type II CRISPR loci if present in the organism. This is Ribonuclease 3 from Latilactobacillus sakei subsp. sakei (strain 23K) (Lactobacillus sakei subsp. sakei).